Reading from the N-terminus, the 424-residue chain is Protein SamB (424 aa).

Residues 2–189 (FALADVNSFY…QPVEEIWGVG (188 aa)) enclose the UmuC domain.

The protein belongs to the DNA polymerase type-Y family.

Its function is as follows. Involved in UV protection and mutation. The sequence is that of Protein SamB (samB) from Salmonella typhimurium.